The chain runs to 168 residues: Mitochondrial ATP-independent inner membrane protease subunit 1a (168 aa).

The N-terminal 47 residues, 1-47 (MRMTFLSYLKQWRGTAKEAFENVSIVAKFLCLLHVTDRYIISTTHVH), are a transit peptide targeting the mitochondrion. Active-site residues include Ser50 and Lys94.

This sequence belongs to the peptidase S26 family. IMP1 subfamily. As to quaternary structure, heterodimer of 2 subunits, IMP1A/B and IMP12.

The protein localises to the mitochondrion inner membrane. In terms of biological role, catalyzes the removal of transit peptides required for the targeting of proteins from the mitochondrial matrix, across the inner membrane, into the inter-membrane space. The sequence is that of Mitochondrial ATP-independent inner membrane protease subunit 1a from Arabidopsis thaliana (Mouse-ear cress).